Reading from the N-terminus, the 211-residue chain is ATP-dependent dethiobiotin synthetase BioD (211 aa).

13–18 (GVGKTV) contributes to the ATP binding site. T17 lines the Mg(2+) pocket. K33 is an active-site residue. Residues C47 and E101 each contribute to the Mg(2+) site. ATP contacts are provided by residues 101–104 (EGAG), 185–187 (PWL), and N192.

Belongs to the dethiobiotin synthetase family. In terms of assembly, homodimer. Mg(2+) is required as a cofactor.

It is found in the cytoplasm. It carries out the reaction (7R,8S)-7,8-diammoniononanoate + CO2 + ATP = (4R,5S)-dethiobiotin + ADP + phosphate + 3 H(+). Its pathway is cofactor biosynthesis; biotin biosynthesis; biotin from 7,8-diaminononanoate: step 1/2. In terms of biological role, catalyzes a mechanistically unusual reaction, the ATP-dependent insertion of CO2 between the N7 and N8 nitrogen atoms of 7,8-diaminopelargonic acid (DAPA, also called 7,8-diammoniononanoate) to form a ureido ring. The protein is ATP-dependent dethiobiotin synthetase BioD of Bradyrhizobium diazoefficiens (strain JCM 10833 / BCRC 13528 / IAM 13628 / NBRC 14792 / USDA 110).